A 493-amino-acid polypeptide reads, in one-letter code: Lysine--tRNA ligase (493 aa).

Residues 26-34 (PSGHIHLGN) carry the 'HIGH' region motif. The 'KMSKS' region signature appears at 270–274 (AMKSS).

It belongs to the class-I aminoacyl-tRNA synthetase family.

Its subcellular location is the cytoplasm. It catalyses the reaction tRNA(Lys) + L-lysine + ATP = L-lysyl-tRNA(Lys) + AMP + diphosphate. This chain is Lysine--tRNA ligase (lysS), found in Archaeoglobus fulgidus (strain ATCC 49558 / DSM 4304 / JCM 9628 / NBRC 100126 / VC-16).